We begin with the raw amino-acid sequence, 254 residues long: Probable septum site-determining protein MinC (254 aa).

This sequence belongs to the MinC family. Interacts with MinD and FtsZ.

Its function is as follows. Cell division inhibitor that blocks the formation of polar Z ring septums. Rapidly oscillates between the poles of the cell to destabilize FtsZ filaments that have formed before they mature into polar Z rings. Prevents FtsZ polymerization. The polypeptide is Probable septum site-determining protein MinC (Burkholderia ambifaria (strain ATCC BAA-244 / DSM 16087 / CCUG 44356 / LMG 19182 / AMMD) (Burkholderia cepacia (strain AMMD))).